The primary structure comprises 373 residues: Dual-specificity RNA methyltransferase RlmN (373 aa).

The Proton acceptor role is filled by E94. The 240-residue stretch at 100–339 folds into the Radical SAM core domain; sequence EDDRATLCVS…VIVRKTRGDD (240 aa). The cysteines at positions 107 and 344 are disulfide-linked. 3 residues coordinate [4Fe-4S] cluster: C114, C118, and C121. Residues 168-169, S200, 222-224, and N301 each bind S-adenosyl-L-methionine; these read GE and SIH. C344 functions as the S-methylcysteine intermediate in the catalytic mechanism.

This sequence belongs to the radical SAM superfamily. RlmN family. [4Fe-4S] cluster serves as cofactor.

The protein resides in the cytoplasm. The enzyme catalyses adenosine(2503) in 23S rRNA + 2 reduced [2Fe-2S]-[ferredoxin] + 2 S-adenosyl-L-methionine = 2-methyladenosine(2503) in 23S rRNA + 5'-deoxyadenosine + L-methionine + 2 oxidized [2Fe-2S]-[ferredoxin] + S-adenosyl-L-homocysteine. It carries out the reaction adenosine(37) in tRNA + 2 reduced [2Fe-2S]-[ferredoxin] + 2 S-adenosyl-L-methionine = 2-methyladenosine(37) in tRNA + 5'-deoxyadenosine + L-methionine + 2 oxidized [2Fe-2S]-[ferredoxin] + S-adenosyl-L-homocysteine. Specifically methylates position 2 of adenine 2503 in 23S rRNA and position 2 of adenine 37 in tRNAs. m2A2503 modification seems to play a crucial role in the proofreading step occurring at the peptidyl transferase center and thus would serve to optimize ribosomal fidelity. This chain is Dual-specificity RNA methyltransferase RlmN, found in Shewanella oneidensis (strain ATCC 700550 / JCM 31522 / CIP 106686 / LMG 19005 / NCIMB 14063 / MR-1).